A 477-amino-acid chain; its full sequence is MAGKTLYDKLWEAHEVKRRDDGSSLIYIDRHIIHEVTSPQAFEGLRLANRKPWRIDANIATPDHNVPTTPERKGGIEAIVDQVSRLQVQTLDENCDEYGIVEFKMNDVRQGIVHVISPEQGATLPGMTVVCGDSHTSTHGAFGALAHGIGTSEVEHVLATQCLVAKKMKNMLVRVEGTLPAGVTAKDIVLAVIGKIGTAGGNGHAMEFAGSAIRELSMEGRMTICNMSIEAGARVGLVATDATTIAYVEGRPYAPKGEQWERAVEAWKDLVSDDDAVFDTVVELDAAQIKPQVSWGTSPEMVLAVDQRVPDPAAEADLVKRGSIERALKYMGLRANQAITDIHLDRVFIGSCTNSRIEDLRAAAEIAKGRKVAATVKQAIVVPGSGLVKAQAEREGLDKIFLEAGFEWREPGCSMCLAMNPDRLESGEHCASTSNRNFEGRQGAGGRTHLVSPAMAAAAAVTGHFIDVRELIQGSAA.

Residues C352, C413, and C416 each contribute to the [4Fe-4S] cluster site.

Belongs to the aconitase/IPM isomerase family. LeuC type 1 subfamily. Heterodimer of LeuC and LeuD. [4Fe-4S] cluster is required as a cofactor.

It carries out the reaction (2R,3S)-3-isopropylmalate = (2S)-2-isopropylmalate. It functions in the pathway amino-acid biosynthesis; L-leucine biosynthesis; L-leucine from 3-methyl-2-oxobutanoate: step 2/4. Its function is as follows. Catalyzes the isomerization between 2-isopropylmalate and 3-isopropylmalate, via the formation of 2-isopropylmaleate. The sequence is that of 3-isopropylmalate dehydratase large subunit from Pseudomonas putida (strain W619).